Here is a 124-residue protein sequence, read N- to C-terminus: Splicing factor 3B subunit 6-like protein (124 aa).

The segment at 16 to 29 is interaction with pre-mRNA branch site; the sequence is EVNRVLYVRNLPFN. Positions 19–94 constitute an RRM domain; sequence RVLYVRNLPF…RYLIVLYYQH (76 aa).

Its subcellular location is the nucleus. Functionally, may be necessary for the splicing of pre-mRNA. The polypeptide is Splicing factor 3B subunit 6-like protein (Arabidopsis thaliana (Mouse-ear cress)).